The following is a 1693-amino-acid chain: 1-phosphatidylinositol 4,5-bisphosphate phosphodiesterase eta-1 (1693 aa).

In terms of domain architecture, PH spans 20–128 (SVMQSGTQMI…WITGLKYLMA (109 aa)). 3 EF-hand domains span residues 142 to 177 (THDQ…LNVN), 178 to 214 (LPRR…MSLR), and 226 to 246 (DKKD…EQKM). 4 residues coordinate Ca(2+): aspartate 155, asparagine 157, aspartate 159, and glutamate 166. A PI-PLC X-box domain is found at 299–444 (QDMDQPLCNY…LKGKILVKGK (146 aa)). The active site involves histidine 314. 3 residues coordinate Ca(2+): asparagine 315, glutamate 344, and aspartate 346. Histidine 358 is an active-site residue. Glutamate 393 is a Ca(2+) binding site. Substrate-binding residues include lysine 442 and lysine 444. The interval 526–585 (LNAHLKQSPDVKESGKKSHGRSLMTNFGKHKKTTKSRSKSYSTDDEEDTQQSTGKEGGQL) is disordered. A compositionally biased stretch (basic and acidic residues) spans 532 to 541 (QSPDVKESGK). Positions 553–563 (GKHKKTTKSRS) are enriched in basic residues. Residues 601-714 (LSDLVVYTNS…GYVLKPQQMC (114 aa)) enclose the PI-PLC Y-box domain. Substrate-binding residues include serine 627 and arginine 654. The C2 domain maps to 715 to 843 (KGTFNPFSGD…PGYRHVYLEG (129 aa)). Isoleucine 758, aspartate 760, aspartate 784, aspartate 813, histidine 814, and aspartate 815 together coordinate Ca(2+). A compositionally biased stretch (basic and acidic residues) spans 992–1005 (IEGKENSLAEDKDG). 4 disordered regions span residues 992–1014 (IEGK…ASIK), 1052–1089 (TGEQ…PKQH), 1300–1329 (LESN…ETLK), and 1578–1613 (LSSR…GAGV). Over residues 1065–1086 (RTTSNATSNCQENPCPSKSLSP) the composition is skewed to polar residues. Residues 1592 to 1601 (RAKEKQEANK) show a composition bias toward basic and acidic residues.

Requires Ca(2+) as cofactor. Expressed in brain and to a lower extent in lung. In brain, it is found in cerebrum, cerebellum and spinal cord. In embryo expressed in the notochord, developing spinal cord (in a ventral to dorsal gradient), dorsal root ganglia, cerebellum and dermatomyosome.

The protein localises to the cytoplasm. It is found in the membrane. The enzyme catalyses a 1,2-diacyl-sn-glycero-3-phospho-(1D-myo-inositol-4,5-bisphosphate) + H2O = 1D-myo-inositol 1,4,5-trisphosphate + a 1,2-diacyl-sn-glycerol + H(+). Functionally, the production of the second messenger molecules diacylglycerol (DAG) and inositol 1,4,5-trisphosphate (IP3) is mediated by calcium-activated phosphatidylinositol-specific phospholipase C enzymes. The protein is 1-phosphatidylinositol 4,5-bisphosphate phosphodiesterase eta-1 of Homo sapiens (Human).